The following is a 333-amino-acid chain: L-lactate dehydrogenase A chain (333 aa).

NAD(+) contacts are provided by residues 30 to 58 (GAVGMACAMSILMKDLADELALVDVIEDK) and R100. Residues R107, N139, and R170 each contribute to the substrate site. N139 provides a ligand contact to NAD(+). Residue H194 is the Proton acceptor of the active site. T249 contributes to the substrate binding site.

It belongs to the LDH/MDH superfamily. LDH family. In terms of assembly, homotetramer.

The protein resides in the cytoplasm. The enzyme catalyses (S)-lactate + NAD(+) = pyruvate + NADH + H(+). It participates in fermentation; pyruvate fermentation to lactate; (S)-lactate from pyruvate: step 1/1. Functionally, interconverts simultaneously and stereospecifically pyruvate and lactate with concomitant interconversion of NADH and NAD(+). The polypeptide is L-lactate dehydrogenase A chain (LDHA) (Ambystoma mexicanum (Axolotl)).